Consider the following 752-residue polypeptide: Zinc finger protein 425 (752 aa).

The KRAB domain occupies 9–80 (VTFDDVALYF…EQGCLDKTRR (72 aa)). 19 consecutive C2H2-type zinc fingers follow at residues 190 to 212 (YSCYVCRKVFQVRRDLLKHKRSH), 246 to 268 (FQCSECEKSYFLKGSLVTHQVVH), 274 to 296 (YPCPECDKTFRYRANLKKHLCLH), 302 to 324 (FCCGECGRAFVQQCELTEHLRLH), 330 to 352 (FQCPQCDRCFRLKRGMKVHLTQH), 358 to 380 (FHCPECGRSFSRKAALKTHQRTH), 386 to 408 (FSCGECGRKFIYKIKLDEHIRVH), 414 to 436 (FSCPECNKSFRLKRSLKAHGLQH), 442 to 464 (FQCPECSRGFFWRNAMRAHQRLH), 470 to 492 (FPCAECGKRFTRPSKLACHTRVH), 498 to 520 (FPCGECKKTFSQQSRLTQHLKVH), 526 to 548 (FSCAECGRSFRRRAHLTEHTRLH), 554 to 576 (FQCPECDKSFSWKASMKFHQRMH), 582 to 604 (FACGECDKTYTHQSQLTEHLRLH), 610 to 632 (YQCPECEKTFRLKGNLKSHLLQH), 638 to 660 (FSCVMCGKSFTQQYRLTEHIRVH), 666 to 688 (FQCPECDKSYCIRGSLKVHLYKH), 694 to 716 (FQCPECGKGFLQKRSLKAHLCLH), and 722 to 744 (FSCDECGRSFTYVGALKTHIAVH).

The protein belongs to the krueppel C2H2-type zinc-finger protein family.

It is found in the nucleus. The protein resides in the cytoplasm. Its function is as follows. Acts as a transcriptional repressor. In Homo sapiens (Human), this protein is Zinc finger protein 425 (ZNF425).